We begin with the raw amino-acid sequence, 287 residues long: HTH-type transcriptional regulator MurR (287 aa).

Residues 1–77 form the HTH rpiR-type domain; that stretch reads MLYLAKMRNA…MALIEEYSVN (77 aa). A DNA-binding region (H-T-H motif) is located at residues 37–56; the sequence is SRNLAKQLEVSQSSIVKFAQ. Residues 128 to 268 enclose the SIS domain; it reads VINLISKARL…FVGMVQLNDV (141 aa).

In terms of assembly, homotetramer.

The protein operates within amino-sugar metabolism; N-acetylmuramate degradation [regulation]. Its function is as follows. Represses the expression of the murPQ operon involved in the uptake and degradation of N-acetylmuramic acid (MurNAc). Binds to two adjacent inverted repeats within the operator region. MurNAc 6-phosphate, the substrate of MurQ, is the specific inducer that weakens binding of MurR to the operator. This Citrobacter koseri (strain ATCC BAA-895 / CDC 4225-83 / SGSC4696) protein is HTH-type transcriptional regulator MurR.